The primary structure comprises 419 residues: Epothilone C/D epoxidase (419 aa).

Substrate-binding residues include Ala-180 and Gly-304. Cys-365 contacts heme.

Belongs to the cytochrome P450 family. It depends on heme as a cofactor.

The catalysed reaction is epothilone C + 2 reduced [2Fe-2S]-[ferredoxin] + O2 + 2 H(+) = epothilone A + 2 oxidized [2Fe-2S]-[ferredoxin] + H2O. It carries out the reaction epothilone D + 2 reduced [2Fe-2S]-[ferredoxin] + O2 + 2 H(+) = epothilone B + 2 oxidized [2Fe-2S]-[ferredoxin] + H2O. It functions in the pathway secondary metabolite biosynthesis; epothilone biosynthesis. In terms of biological role, involved in the biosynthesis of epothilones, macrolactones which have a narrow anti-fungal spectrum and microtubule-stabilizing activity. Catalyzes the epoxidation of epothilones C and D to epothilones A and B, respectively. This Sorangium cellulosum (Polyangium cellulosum) protein is Epothilone C/D epoxidase (cyp167A1).